The chain runs to 142 residues: ATP synthase subunit b' (142 aa).

A helical membrane pass occupies residues 7-27; sequence TLPLMMFQFFLLVAVLNAVFF.

It belongs to the ATPase B chain family. F-type ATPases have 2 components, F(1) - the catalytic core - and F(0) - the membrane proton channel. F(1) has five subunits: alpha(3), beta(3), gamma(1), delta(1), epsilon(1). F(0) has four main subunits: a(1), b(1), b'(1) and c(10-14). The alpha and beta chains form an alternating ring which encloses part of the gamma chain. F(1) is attached to F(0) by a central stalk formed by the gamma and epsilon chains, while a peripheral stalk is formed by the delta, b and b' chains.

Its subcellular location is the cellular thylakoid membrane. Its function is as follows. F(1)F(0) ATP synthase produces ATP from ADP in the presence of a proton or sodium gradient. F-type ATPases consist of two structural domains, F(1) containing the extramembraneous catalytic core and F(0) containing the membrane proton channel, linked together by a central stalk and a peripheral stalk. During catalysis, ATP synthesis in the catalytic domain of F(1) is coupled via a rotary mechanism of the central stalk subunits to proton translocation. Functionally, component of the F(0) channel, it forms part of the peripheral stalk, linking F(1) to F(0). The b'-subunit is a diverged and duplicated form of b found in plants and photosynthetic bacteria. This chain is ATP synthase subunit b', found in Acaryochloris marina (strain MBIC 11017).